The sequence spans 604 residues: MATTGEKAIYEDQNNVNIIENVVDVANGINESPKTLFEEDGSSRDSGVSMTSCSDKSDASPEEDVDFSKLESGRVALTDCSNFVSILQRNSSVSSSRSSSFYNYDTPTGRKMKTVFDLDSLDHSEYEKRVMSERPTDNHRKRTSSSMSPSVTLLDRKRSRNLSLVAPQSDKSCRYNGLNNPRDDPFGDEDDEVFEQSNVRNSQVQNTSIFAQPAPRTATSLWDLAPPMFFERKTSDTSGNGSFQERPKQILRAMSVGEIDSELPPTLEVKYTLPGVDNPQRESQAFRSISPTTLLLEFQRLGDDFDKKYIIVDCRFPFEYKGGHVKGAINLFRHDKIKPIFFPENGEASSFQNRVPIFYCEYSQKRGPTMAHAVRSIDRVLNELRYPHVEYPEMYLLDYGYKSLWSTAECRQICEPCSYIPMTHSSFSMEFKSARLERHHSMASLKPNGETSHREEKKKRCTRSVIRRNNSSLNMLSRSSSALTSTGSKTSSMENILYGLDDERRPKWVSAFDIQSTESENDLDAALIYQRNISSNASNASSIVNLAEERIVQLGLQVITPDFPDRPSESSSTTPAGEHLPLGEGGHQIPCGILDFSSISDDAE.

2 disordered regions span residues 33-67 and 127-188; these read PKTLFEEDGSSRDSGVSMTSCSDKSDASPEEDVDF and EKRV…PFGD. The span at 44–54 shows a compositional bias: polar residues; it reads RDSGVSMTSCS. The segment covering 127–138 has biased composition (basic and acidic residues); the sequence is EKRVMSERPTDN. One can recognise a Rhodanese domain in the interval 305–413; sequence FDKKYIIVDC…LWSTAECRQI (109 aa). 2 disordered regions span residues 443–464 and 562–588; these read ASLKPNGETSHREEKKKRCTRS and DFPDRPSESSSTTPAGEHLPLGEGGHQ.

This sequence belongs to the MPI phosphatase family.

The enzyme catalyses O-phospho-L-tyrosyl-[protein] + H2O = L-tyrosyl-[protein] + phosphate. This is M-phase inducer phosphatase cdc-25.1 (cdc-25.1) from Caenorhabditis elegans.